We begin with the raw amino-acid sequence, 170 residues long: Acireductone dioxygenase (170 aa).

4 residues coordinate Fe(2+): His-99, His-101, Glu-105, and His-144. His-99, His-101, Glu-105, and His-144 together coordinate Ni(2+).

It belongs to the acireductone dioxygenase (ARD) family. Monomer. Fe(2+) is required as a cofactor. Ni(2+) serves as cofactor.

The enzyme catalyses 1,2-dihydroxy-5-(methylsulfanyl)pent-1-en-3-one + O2 = 3-(methylsulfanyl)propanoate + CO + formate + 2 H(+). It carries out the reaction 1,2-dihydroxy-5-(methylsulfanyl)pent-1-en-3-one + O2 = 4-methylsulfanyl-2-oxobutanoate + formate + 2 H(+). Its pathway is amino-acid biosynthesis; L-methionine biosynthesis via salvage pathway; L-methionine from S-methyl-5-thio-alpha-D-ribose 1-phosphate: step 5/6. Catalyzes 2 different reactions between oxygen and the acireductone 1,2-dihydroxy-3-keto-5-methylthiopentene (DHK-MTPene) depending upon the metal bound in the active site. Fe-containing acireductone dioxygenase (Fe-ARD) produces formate and 2-keto-4-methylthiobutyrate (KMTB), the alpha-ketoacid precursor of methionine in the methionine recycle pathway. Ni-containing acireductone dioxygenase (Ni-ARD) produces methylthiopropionate, carbon monoxide and formate, and does not lie on the methionine recycle pathway. The sequence is that of Acireductone dioxygenase from Bacillus cereus (strain ZK / E33L).